Reading from the N-terminus, the 608-residue chain is Eukaryotic translation initiation factor 2A (608 aa).

A disordered region spans residues Met-1–Glu-42. 4 WD repeats span residues Ile-115–Lys-161, Ile-207–Ser-255, Asn-310–Asp-350, and Phe-351–Gly-393. Composition is skewed to low complexity over residues Ser-466–Gln-478 and Ser-520–Pro-544. Disordered regions lie at residues Ser-466–Pro-499 and Ser-520–Thr-554. Basic and acidic residues predominate over residues Ala-545–Thr-554. Residues Lys-550 to Leu-608 are a coiled coil.

The protein belongs to the WD repeat EIF2A family.

Functionally, functions in the early steps of protein synthesis of a small number of specific mRNAs. Acts by directing the binding of methionyl-tRNAi to 40S ribosomal subunits. In contrast to the eIF-2 complex, it binds methionyl-tRNAi to 40S subunits in a codon-dependent manner, whereas the eIF-2 complex binds methionyl-tRNAi to 40S subunits in a GTP-dependent manner. The chain is Eukaryotic translation initiation factor 2A (eif2a) from Dictyostelium discoideum (Social amoeba).